Here is a 197-residue protein sequence, read N- to C-terminus: Short chain dehydrogenase ausX (197 aa).

Positions 49, 95, 157, and 189 each coordinate NADP(+). Tyr189 functions as the Proton acceptor in the catalytic mechanism. Tyr189 acts as the Proton donor in catalysis.

The protein belongs to the short-chain dehydrogenases/reductases (SDR) family.

Its pathway is secondary metabolite biosynthesis; terpenoid biosynthesis. In terms of biological role, short chain dehydrogenase; part of the gene cluster A that mediates the biosynthesis of austinol and dehydroaustinol, two fungal meroterpenoids. The first step of the pathway is the synthesis of 3,5-dimethylorsellinic acid by the polyketide synthase ausA. 3,5-dimethylorsellinic acid is then prenylated by the polyprenyl transferase ausN. Further epoxidation by the FAD-dependent monooxygenase ausM and cyclization by the probable terpene cyclase ausL lead to the formation of protoaustinoid A. Protoaustinoid A is then oxidized to spiro-lactone preaustinoid A3 by the combined action of the FAD-binding monooxygenases ausB and ausC, and the dioxygenase ausE. Acid-catalyzed keto-rearrangement and ring contraction of the tetraketide portion of preaustinoid A3 by ausJ lead to the formation of preaustinoid A4. The aldo-keto reductase ausK, with the help of ausH, is involved in the next step by transforming preaustinoid A4 into isoaustinone which is in turn hydroxylated by the P450 monooxygenase ausI to form austinolide. Finally, the cytochrome P450 monooxygenase ausG modifies austinolide to austinol. Austinol can be further modified to dehydroaustinol which forms a diffusible complex with diorcinol that initiates conidiation. Due to genetic rearrangements of the clusters and the subsequent loss of some enzymes, the end products of the Emericella nidulans austinoid biosynthesis clusters are austinol and dehydroaustinol, even if additional enzymes, such as the O-acetyltransferase ausQ and the cytochrome P450 monooxygenase ausR are still functional. The sequence is that of Short chain dehydrogenase ausX from Emericella nidulans (strain FGSC A4 / ATCC 38163 / CBS 112.46 / NRRL 194 / M139) (Aspergillus nidulans).